The chain runs to 2138 residues: DNA polymerase epsilon catalytic subunit B (2138 aa).

A Nuclear localization signal 1 motif is present at residues 1224–1231; sequence EKRKWKMT. Residues Cys2015, Cys2018, Cys2040, and Cys2045 each contribute to the Zn(2+) site. The segment at 2015-2045 adopts a CysA-type zinc-finger fold; that stretch reads CSNCGAYRDLDFCRDSALLTEKEWSCADPQC. [4Fe-4S] cluster contacts are provided by Cys2076, Cys2079, Cys2091, and Cys2093. The CysB motif motif lies at 2076 to 2093; it reads CNRCNQVKAAHLTEQCEC. The Nuclear localization signal 2 signature appears at 2107 to 2114; that stretch reads HKRIEIFL.

The protein belongs to the DNA polymerase type-B family. Heterotetramer. The cofactor is [4Fe-4S] cluster. Mostly expressed at low levels in inflorescence (floral meristem and flowers until anthesis), and, to a lower extent, in seeds.

Its subcellular location is the nucleus. The enzyme catalyses DNA(n) + a 2'-deoxyribonucleoside 5'-triphosphate = DNA(n+1) + diphosphate. DNA polymerase II, which participates in chromosomal DNA replication. Involved in the determination of cell fate during plant embryogenesis. Contributes to the flowering time repression. The protein is DNA polymerase epsilon catalytic subunit B (POL2B) of Arabidopsis thaliana (Mouse-ear cress).